We begin with the raw amino-acid sequence, 280 residues long: Putative pyruvate, phosphate dikinase regulatory protein (280 aa).

Residue Gly-153–Thr-160 participates in ADP binding.

The protein belongs to the pyruvate, phosphate/water dikinase regulatory protein family. PDRP subfamily.

The enzyme catalyses N(tele)-phospho-L-histidyl/L-threonyl-[pyruvate, phosphate dikinase] + ADP = N(tele)-phospho-L-histidyl/O-phospho-L-threonyl-[pyruvate, phosphate dikinase] + AMP + H(+). It carries out the reaction N(tele)-phospho-L-histidyl/O-phospho-L-threonyl-[pyruvate, phosphate dikinase] + phosphate + H(+) = N(tele)-phospho-L-histidyl/L-threonyl-[pyruvate, phosphate dikinase] + diphosphate. Functionally, bifunctional serine/threonine kinase and phosphorylase involved in the regulation of the pyruvate, phosphate dikinase (PPDK) by catalyzing its phosphorylation/dephosphorylation. The sequence is that of Putative pyruvate, phosphate dikinase regulatory protein from Bartonella quintana (strain Toulouse) (Rochalimaea quintana).